Consider the following 331-residue polypeptide: MAVNLKGRSFLTLKDFTPAEIRYLLDLSHDLKAKKRAGILGDSLKGKNVVLLFEKTSTRTRCAFECGAAEEGAHVTFLTNSQMGKKESIEDTAKVLGRMYDGIEFRGFKQSTVEELAKHAGVPVWNGLTDADHPTQILADFLTIEEHAHKPLSEIKLVFTGDTRNNMSYALMYGAAKMGMHFVALGPDSLKPDEDILKEMQEYSKETGATIEFSSNVDEAVKGADVIYTDIWVSMGEDESLYPERVKLLTPYKVTREMMNKTGNKNTLFMHCLPSFHDEDTEVCKDMMDRLGLDIREVEDEVFRSKNSVVFDEAENRMHTIKAVMVATAGR.

Carbamoyl phosphate contacts are provided by residues 57–60 (STRT), Gln-82, Arg-106, and 133–136 (HPTQ). Residues Asn-166, Asp-230, and 234–235 (SM) each bind L-ornithine. Residues 272-273 (CL) and Arg-317 contribute to the carbamoyl phosphate site.

This sequence belongs to the aspartate/ornithine carbamoyltransferase superfamily. OTCase family.

The protein localises to the cytoplasm. It catalyses the reaction carbamoyl phosphate + L-ornithine = L-citrulline + phosphate + H(+). Its pathway is amino-acid degradation; L-arginine degradation via ADI pathway; carbamoyl phosphate from L-arginine: step 2/2. Its function is as follows. Reversibly catalyzes the transfer of the carbamoyl group from carbamoyl phosphate (CP) to the N(epsilon) atom of ornithine (ORN) to produce L-citrulline. In Clostridium perfringens (strain ATCC 13124 / DSM 756 / JCM 1290 / NCIMB 6125 / NCTC 8237 / Type A), this protein is Ornithine carbamoyltransferase, catabolic (arcB).